The primary structure comprises 260 residues: Triosephosphate isomerase (260 aa).

A substrate-binding site is contributed by 10–12; that stretch reads NWK. His100 (electrophile) is an active-site residue. The active-site Proton acceptor is the Glu172. Substrate contacts are provided by residues Gly178, Ser218, and 239 to 240; that span reads GG.

Belongs to the triosephosphate isomerase family. In terms of assembly, homodimer.

Its subcellular location is the cytoplasm. It catalyses the reaction D-glyceraldehyde 3-phosphate = dihydroxyacetone phosphate. The protein operates within carbohydrate biosynthesis; gluconeogenesis. It functions in the pathway carbohydrate degradation; glycolysis; D-glyceraldehyde 3-phosphate from glycerone phosphate: step 1/1. Involved in the gluconeogenesis. Catalyzes stereospecifically the conversion of dihydroxyacetone phosphate (DHAP) to D-glyceraldehyde-3-phosphate (G3P). This chain is Triosephosphate isomerase, found in Corynebacterium diphtheriae (strain ATCC 700971 / NCTC 13129 / Biotype gravis).